A 401-amino-acid polypeptide reads, in one-letter code: CLIP domain-containing serine protease B9 (401 aa).

An N-terminal signal peptide occupies residues 1–26 (MTSYNRSVAWLTVCVLLALHIGGSHQ). The region spanning 30–85 (QCTTPTRLRGRCISIYECDSILDYFKQRILTWEEREFLRKSQCTGATSGRQPFVCC) is the Clip domain. Cystine bridges form between C31-C84, C41-C72, and C47-C85. N-linked (GlcNAc...) asparagine glycosylation is present at N88. The Peptidase S1 domain maps to 148–400 (IYGGQNADID…YMAWVRSNIK (253 aa)). C178 and C194 are oxidised to a cystine. Residues H193 and D257 each act as charge relay system in the active site. Cystine bridges form between C322-C339 and C349-C376. A glycan (N-linked (GlcNAc...) asparagine) is linked at N330. S353 (charge relay system) is an active-site residue.

The protein belongs to the peptidase S1 family. CLIP subfamily. In terms of assembly, forms a covalent heterodimer with SRPN2; the interaction inhibits CLIPB9 protease activity. In terms of processing, proteolytic cleavage is necessary for activation.

It is found in the secreted. Inhibited by serpin SRPN2. Serine protease that functions in the melanization-mediated immune response. Cleaves and activates prophenoloxidase (PPO), which is required for the activation of the prophenoloxidase cascade probably following the recognition of pathogen-derived products. This chain is CLIP domain-containing serine protease B9, found in Anopheles gambiae (African malaria mosquito).